The chain runs to 451 residues: Eukaryotic translation initiation factor 3 subunit E (451 aa).

The PCI domain maps to 256 to 425; sequence TDLFFSPAYI…GTVIMNHPPQ (170 aa).

It belongs to the eIF-3 subunit E family. Component of the eukaryotic translation initiation factor 3 (eIF-3) complex.

The protein localises to the cytoplasm. Its function is as follows. Component of the eukaryotic translation initiation factor 3 (eIF-3) complex, which is involved in protein synthesis of a specialized repertoire of mRNAs and, together with other initiation factors, stimulates binding of mRNA and methionyl-tRNAi to the 40S ribosome. The eIF-3 complex specifically targets and initiates translation of a subset of mRNAs involved in cell proliferation. In Aspergillus fumigatus (strain CBS 144.89 / FGSC A1163 / CEA10) (Neosartorya fumigata), this protein is Eukaryotic translation initiation factor 3 subunit E (int6).